Here is a 273-residue protein sequence, read N- to C-terminus: F-actin-capping protein subunit alpha (273 aa).

Belongs to the F-actin-capping protein alpha subunit family. As to quaternary structure, component of the F-actin capping complex, composed of a heterodimer of an alpha and a beta subunit.

It is found in the cytoplasm. The protein resides in the cytoskeleton. The protein localises to the actin patch. Its function is as follows. F-actin-capping proteins bind in a Ca(2+)-independent manner to the fast growing ends of actin filaments (barbed end) thereby blocking the exchange of subunits at these ends. Unlike other capping proteins (such as gelsolin and severin), these proteins do not sever actin filaments. This chain is F-actin-capping protein subunit alpha (cap1), found in Aspergillus oryzae (strain ATCC 42149 / RIB 40) (Yellow koji mold).